The primary structure comprises 443 residues: Phosphoglucosamine mutase (443 aa).

Ser-101 (phosphoserine intermediate) is an active-site residue. Mg(2+) is bound by residues Ser-101, Asp-239, Asp-241, and Asp-243. Ser-101 is modified (phosphoserine).

It belongs to the phosphohexose mutase family. The cofactor is Mg(2+). Post-translationally, activated by phosphorylation.

The catalysed reaction is alpha-D-glucosamine 1-phosphate = D-glucosamine 6-phosphate. Catalyzes the conversion of glucosamine-6-phosphate to glucosamine-1-phosphate. This is Phosphoglucosamine mutase from Francisella tularensis subsp. tularensis (strain FSC 198).